The primary structure comprises 480 residues: Proline--tRNA ligase (480 aa).

It belongs to the class-II aminoacyl-tRNA synthetase family. ProS type 3 subfamily. As to quaternary structure, homodimer.

It is found in the cytoplasm. It carries out the reaction tRNA(Pro) + L-proline + ATP = L-prolyl-tRNA(Pro) + AMP + diphosphate. In terms of biological role, catalyzes the attachment of proline to tRNA(Pro) in a two-step reaction: proline is first activated by ATP to form Pro-AMP and then transferred to the acceptor end of tRNA(Pro). The chain is Proline--tRNA ligase from Alkaliphilus oremlandii (strain OhILAs) (Clostridium oremlandii (strain OhILAs)).